A 364-amino-acid chain; its full sequence is Phosphoserine aminotransferase (364 aa).

Residue R41 participates in L-glutamate binding. Residues 75–76 (AS), W100, T155, D175, and Q198 each bind pyridoxal 5'-phosphate. The residue at position 199 (K199) is an N6-(pyridoxal phosphate)lysine. Pyridoxal 5'-phosphate is bound at residue 239-240 (NT).

This sequence belongs to the class-V pyridoxal-phosphate-dependent aminotransferase family. SerC subfamily. Homodimer. Pyridoxal 5'-phosphate is required as a cofactor.

Its subcellular location is the cytoplasm. The enzyme catalyses O-phospho-L-serine + 2-oxoglutarate = 3-phosphooxypyruvate + L-glutamate. The catalysed reaction is 4-(phosphooxy)-L-threonine + 2-oxoglutarate = (R)-3-hydroxy-2-oxo-4-phosphooxybutanoate + L-glutamate. It functions in the pathway amino-acid biosynthesis; L-serine biosynthesis; L-serine from 3-phospho-D-glycerate: step 2/3. Functionally, catalyzes the reversible conversion of 3-phosphohydroxypyruvate to phosphoserine and of 3-hydroxy-2-oxo-4-phosphonooxybutanoate to phosphohydroxythreonine. The protein is Phosphoserine aminotransferase of Streptococcus uberis (strain ATCC BAA-854 / 0140J).